Consider the following 466-residue polypeptide: Cysteine--tRNA ligase (466 aa).

Cys27 serves as a coordination point for Zn(2+). A 'HIGH' region motif is present at residues 29-39 (PTVYDDAHLGH). Cys208, His238, and Glu242 together coordinate Zn(2+). The short motif at 270–274 (KMSKS) is the 'KMSKS' region element. Lys273 serves as a coordination point for ATP.

This sequence belongs to the class-I aminoacyl-tRNA synthetase family. In terms of assembly, monomer. Requires Zn(2+) as cofactor.

The protein localises to the cytoplasm. The catalysed reaction is tRNA(Cys) + L-cysteine + ATP = L-cysteinyl-tRNA(Cys) + AMP + diphosphate. The polypeptide is Cysteine--tRNA ligase (Sulfurimonas denitrificans (strain ATCC 33889 / DSM 1251) (Thiomicrospira denitrificans (strain ATCC 33889 / DSM 1251))).